The following is a 785-amino-acid chain: Adhesion G-protein coupled receptor G7 (785 aa).

The N-terminal stretch at 1 to 26 (MRSCRSCNVRVLVAIVCGLLTGIVLG) is a signal peptide. Residues 27–435 (LGIWRMVIRI…KYPKSLDILS (409 aa)) are Extracellular-facing. Residues Asn82, Asn122, Asn133, Asn152, Asn159, Asn178, Asn195, Asn239, Asn289, Asn348, Asn400, and Asn408 are each glycosylated (N-linked (GlcNAc...) asparagine). The 155-residue stretch at 271–425 (FSVQKGSSNS…AVLMSFKKDY (155 aa)) folds into the GAIN-B domain. 2 cysteine pairs are disulfide-bonded: Cys380–Cys407 and Cys395–Cys409. Positions 380–425 (CVYWNFLINDWDTQGCQKTGNTTEFLRCNCSHTTNFAVLMSFKKDY) are GPS. A helical transmembrane segment spans residues 436–456 (NIGCALSIAGLALTILFQILT). Residues 457–465 (RKIRKTSVT) are Cytoplasmic-facing. The helical transmembrane segment at 466 to 486 (WVLVSLCSSMLIFNLLFVFGI) threads the bilayer. At 487-523 (ENSNKNLKTSDSDINVKPENNKIPESDTIETPNPSCT) the chain is on the extracellular side. A helical transmembrane segment spans residues 524–544 (AIAALLHYFLLVTFTWNGLSA). Over 545-561 (TQLYFLLIRTMKPLPRH) the chain is Cytoplasmic. The chain crosses the membrane as a helical span at residues 562-582 (FIIFISLVGWGVPAIIVGVTI). Residues 583–623 (GSIYALSGNKRYWELDYRQEEICWLAVPKDNDYARSPLLWS) lie on the Extracellular side of the membrane. The chain crosses the membrane as a helical span at residues 624 to 644 (FIIPVTIILITNITIFVIITV). Residues 645-668 (KVLWKNNQNLTSTKKVSSLKKVFS) are Cytoplasmic-facing. The helical transmembrane segment at 669–689 (TLSIAVVFGVTWILAYAMLIS) threads the bilayer. At 690–694 (NDDIR) the chain is on the extracellular side. A helical membrane pass occupies residues 695–715 (IVFSYIFCLFNTTQGLQIFIL). Topologically, residues 716–785 (YTVRTKVFQS…SGMTEETSLS (70 aa)) are cytoplasmic.

The protein belongs to the G-protein coupled receptor 2 family. Adhesion G-protein coupled receptor (ADGR) subfamily. In terms of tissue distribution, selectively expressed in the intestinal tissues.

Its subcellular location is the membrane. In terms of biological role, orphan receptor. This chain is Adhesion G-protein coupled receptor G7 (Adgrg7), found in Mus musculus (Mouse).